The chain runs to 308 residues: Acetylglutamate kinase (308 aa).

Residues 73 to 74 (GG), arginine 95, and asparagine 194 each bind substrate.

This sequence belongs to the acetylglutamate kinase family. ArgB subfamily.

It localises to the cytoplasm. It catalyses the reaction N-acetyl-L-glutamate + ATP = N-acetyl-L-glutamyl 5-phosphate + ADP. Its pathway is amino-acid biosynthesis; L-arginine biosynthesis; N(2)-acetyl-L-ornithine from L-glutamate: step 2/4. In terms of biological role, catalyzes the ATP-dependent phosphorylation of N-acetyl-L-glutamate. The sequence is that of Acetylglutamate kinase from Rhodococcus jostii (strain RHA1).